A 125-amino-acid polypeptide reads, in one-letter code: Protein sigma-1-small (125 aa).

Belongs to the orthoreovirus sigma-1s protein family.

The polypeptide is Protein sigma-1-small (S1) (Mammalia (T2J)).